A 545-amino-acid polypeptide reads, in one-letter code: High-affinity glucose transporter 1 (545 aa).

The next 9 membrane-spanning stretches (helical) occupy residues 29–49 (VFFI…DISS), 72–92 (GFIT…SSFV), 100–120 (LSLL…SSVQ), 125–145 (LIIG…VAPV), 157–177 (GLIG…MFYL), 192–212 (IAWG…FFIP), 291–311 (LTGM…AGYS), 317–337 (VASS…LYFI), and 345–365 (LLIG…GILG). Residues asparagine 376 and asparagine 387 are each glycosylated (N-linked (GlcNAc...) asparagine). A run of 2 helical transmembrane segments spans residues 395–415 (IACC…GIWV) and 433–453 (ISTS…PTGF). Asparagine 455 carries N-linked (GlcNAc...) asparagine glycosylation. A helical transmembrane segment spans residues 460–480 (TYIIYGVFCFAMATHVYFGFP). Positions 524 to 545 (VEHEEDKLMNEDSNSESRENQA) are disordered.

Belongs to the major facilitator superfamily. Sugar transporter (TC 2.A.1.1) family. As to quaternary structure, interacts with the human complement factors FH and C4BP. Also binds human immunodeficiency virus (HIV) protein gp160.

The protein resides in the cell membrane. Functionally, high-affinity glucose transporter. Acts as a multifunctional complement-evasion molecule that causes down-regulation of complement activation by acquisition of human complement factors FH and C4BP. Also functions as a human immunodeficiency virus (HIV) receptor via binding the viral gp160 protein. Modulates hyphae formation. The polypeptide is High-affinity glucose transporter 1 (Candida albicans (strain SC5314 / ATCC MYA-2876) (Yeast)).